A 331-amino-acid polypeptide reads, in one-letter code: Aspartate carbamoyltransferase catalytic subunit (331 aa).

Arginine 55 and threonine 56 together coordinate carbamoyl phosphate. Position 84 (lysine 84) interacts with L-aspartate. Carbamoyl phosphate-binding residues include arginine 105, histidine 133, and glutamine 136. Residues arginine 166 and arginine 229 each contribute to the L-aspartate site. Residues leucine 268 and proline 269 each coordinate carbamoyl phosphate.

It belongs to the aspartate/ornithine carbamoyltransferase superfamily. ATCase family. In terms of assembly, heterododecamer (2C3:3R2) of six catalytic PyrB chains organized as two trimers (C3), and six regulatory PyrI chains organized as three dimers (R2).

The catalysed reaction is carbamoyl phosphate + L-aspartate = N-carbamoyl-L-aspartate + phosphate + H(+). It functions in the pathway pyrimidine metabolism; UMP biosynthesis via de novo pathway; (S)-dihydroorotate from bicarbonate: step 2/3. Its function is as follows. Catalyzes the condensation of carbamoyl phosphate and aspartate to form carbamoyl aspartate and inorganic phosphate, the committed step in the de novo pyrimidine nucleotide biosynthesis pathway. This is Aspartate carbamoyltransferase catalytic subunit from Alkaliphilus oremlandii (strain OhILAs) (Clostridium oremlandii (strain OhILAs)).